A 320-amino-acid chain; its full sequence is RNA-binding protein Musashi homolog 1 (320 aa).

Residues 1–14 show a composition bias toward low complexity; that stretch reads MTTTVSTGATAVAT. The interval 1-48 is disordered; the sequence is MTTTVSTGATAVATLRETSPPVDGHEEARLNADSDDGSHGSQDPGKMF. The residue at position 18 (Thr18) is a Phosphothreonine. Ser19 and Ser34 each carry phosphoserine. Positions 23 to 38 are enriched in basic and acidic residues; the sequence is DGHEEARLNADSDDGS. RRM domains are found at residues 45 to 124 and 134 to 211; these read GKMF…FPKR and KKVF…KAQP. Required for binding to target mRNAs regions lie at residues 88-93 and 177-182; these read FGFITF and FGFVTF.

Belongs to the Musashi family. In terms of tissue distribution, expressed in the gut and in AVA, AFD, RMD, RMED, RMEV, RMER and RMEL neurons (at protein level). In the tail expressed in neurons and all the ray sensilla. Expressed in male specific C1-C4 neurons.

The protein resides in the cytoplasm. It is found in the perikaryon. RNA binding protein that regulates the expression of target mRNAs at the translation level. Binds RNA containing the 5'-[GA]U(1-3)AGU-3' motif located in the 3' UTR of the target mRNA. Binds to the mRNA of three Arp2/3 complex components arx-1, arx-2 and arx-3 and negatively regulates their translation during association learning. Plays a role in time-dependent memory loss and the retention of conditioned behavior over time, probably through negative regulation of the Arp2/3 actin cytoskeleton branching complex and regulation of synapse size. Required for two aspects of male mating behavior: turning around the hermaphrodite head or tail and vulva location. The protein is RNA-binding protein Musashi homolog 1 of Caenorhabditis elegans.